The sequence spans 37 residues: Cytochrome bd-I ubiquinol oxidase subunit X (37 aa).

A helical membrane pass occupies residues 4 to 24; sequence FAWILGTLLACSFGVITALAL.

The protein belongs to the cytochrome ubiquinol oxidase subunit X family. As to quaternary structure, may be a subunit of cytochrome bd-I ubiquinol oxidase. Probably interacts with CydA and CydB.

Its subcellular location is the cell inner membrane. The catalysed reaction is 2 a ubiquinol + O2(in) + 4 H(+)(in) = 2 a ubiquinone + 2 H2O(in) + 4 H(+)(out). It participates in energy metabolism; oxidative phosphorylation. Required for correct functioning of cytochrome bd-I oxidase. This protein and AppX may have some functional overlap. This is Cytochrome bd-I ubiquinol oxidase subunit X (cydX) from Escherichia coli (strain K12).